Here is a 481-residue protein sequence, read N- to C-terminus: Pyruvate kinase (481 aa).

R33 contributes to the substrate binding site. Residues N35, S37, D67, and T68 each coordinate K(+). An ATP-binding site is contributed by 35 to 38; the sequence is NFSH. ATP contacts are provided by R74 and K155. E221 is a Mg(2+) binding site. Substrate-binding residues include G244, D245, and T277. Residue D245 participates in Mg(2+) binding.

The protein belongs to the pyruvate kinase family. Homotetramer. Mg(2+) serves as cofactor. Requires K(+) as cofactor.

The enzyme catalyses pyruvate + ATP = phosphoenolpyruvate + ADP + H(+). Its pathway is carbohydrate degradation; glycolysis; pyruvate from D-glyceraldehyde 3-phosphate: step 5/5. This Chlamydia muridarum (strain MoPn / Nigg) protein is Pyruvate kinase (pyk).